Here is a 421-residue protein sequence, read N- to C-terminus: Gamma-glutamyl phosphate reductase (421 aa).

This sequence belongs to the gamma-glutamyl phosphate reductase family.

It is found in the cytoplasm. It catalyses the reaction L-glutamate 5-semialdehyde + phosphate + NADP(+) = L-glutamyl 5-phosphate + NADPH + H(+). The protein operates within amino-acid biosynthesis; L-proline biosynthesis; L-glutamate 5-semialdehyde from L-glutamate: step 2/2. Its function is as follows. Catalyzes the NADPH-dependent reduction of L-glutamate 5-phosphate into L-glutamate 5-semialdehyde and phosphate. The product spontaneously undergoes cyclization to form 1-pyrroline-5-carboxylate. This is Gamma-glutamyl phosphate reductase from Azotobacter vinelandii (strain DJ / ATCC BAA-1303).